A 960-amino-acid polypeptide reads, in one-letter code: Endoplasmic reticulum aminopeptidase 2 (960 aa).

The Cytoplasmic portion of the chain corresponds to 1 to 20 (MFHSSAMVNSHRKPMFNIHR). The chain crosses the membrane as a helical; Signal-anchor for type II membrane protein span at residues 21-40 (GFYCLTAILPQICICSQFSV). Topologically, residues 41–960 (PSSYHFTEDP…TLRTWLMVNT (920 aa)) are lumenal. 2 N-linked (GlcNAc...) asparagine glycosylation sites follow: N85 and N119. E200 contributes to the substrate binding site. N-linked (GlcNAc...) asparagine glycosylation occurs at N219. 334 to 338 (GAMEN) provides a ligand contact to substrate. H370 contributes to the Zn(2+) binding site. E371 (proton acceptor) is an active-site residue. Positions 374 and 393 each coordinate Zn(2+). N-linked (GlcNAc...) asparagine glycosylation is present at N405. C421 and C460 are disulfide-bonded. Residue N650 is glycosylated (N-linked (GlcNAc...) asparagine). C759 and C766 are disulfide-bonded.

Belongs to the peptidase M1 family. In terms of assembly, heterodimer with ERAP1. Requires Zn(2+) as cofactor. N-glycosylated. As to expression, ubiquitously expressed. Highly expressed in spleen and leukocytes.

It localises to the endoplasmic reticulum membrane. Functionally, aminopeptidase that plays a central role in peptide trimming, a step required for the generation of most HLA class I-binding peptides. Peptide trimming is essential to customize longer precursor peptides to fit them to the correct length required for presentation on MHC class I molecules. Preferentially hydrolyzes the basic residues Arg and Lys. The sequence is that of Endoplasmic reticulum aminopeptidase 2 (ERAP2) from Homo sapiens (Human).